We begin with the raw amino-acid sequence, 84 residues long: Sec-independent protein translocase protein TatA (84 aa).

Residues 1–21 (MPNLGVPELLIIALVIFLLFG) traverse the membrane as a helical segment. Residues 42–57 (EMDEMKTDGDKKELAE) show a composition bias toward basic and acidic residues. The tract at residues 42-84 (EMDEMKTDGDKKELAEKQAPTAEQQQAQDLAQPKSEQPNEHNA) is disordered. Polar residues predominate over residues 62-77 (TAEQQQAQDLAQPKSE).

Belongs to the TatA/E family. The Tat system comprises two distinct complexes: a TatABC complex, containing multiple copies of TatA, TatB and TatC subunits, and a separate TatA complex, containing only TatA subunits. Substrates initially bind to the TatABC complex, which probably triggers association of the separate TatA complex to form the active translocon.

It localises to the cell membrane. Part of the twin-arginine translocation (Tat) system that transports large folded proteins containing a characteristic twin-arginine motif in their signal peptide across membranes. TatA could form the protein-conducting channel of the Tat system. The chain is Sec-independent protein translocase protein TatA from Corynebacterium jeikeium (strain K411).